The chain runs to 154 residues: Myoglobin (154 aa).

The Globin domain occupies 2-148; the sequence is GLSDGEWQLV…FRNDIAAKYK (147 aa). Position 4 is a phosphoserine (serine 4). Histidine 65 is a binding site for nitrite. An O2-binding site is contributed by histidine 65. Position 68 is a phosphothreonine (threonine 68). Histidine 94 provides a ligand contact to heme b.

This sequence belongs to the globin family. In terms of assembly, monomeric.

It localises to the cytoplasm. The protein localises to the sarcoplasm. The catalysed reaction is Fe(III)-heme b-[protein] + nitric oxide + H2O = Fe(II)-heme b-[protein] + nitrite + 2 H(+). It carries out the reaction H2O2 + AH2 = A + 2 H2O. Its function is as follows. Monomeric heme protein which primary function is to store oxygen and facilitate its diffusion within muscle tissues. Reversibly binds oxygen through a pentacoordinated heme iron and enables its timely and efficient release as needed during periods of heightened demand. Depending on the oxidative conditions of tissues and cells, and in addition to its ability to bind oxygen, it also has a nitrite reductase activity whereby it regulates the production of bioactive nitric oxide. Under stress conditions, like hypoxia and anoxia, it also protects cells against reactive oxygen species thanks to its pseudoperoxidase activity. This Sciurus vulgaris (Eurasian red squirrel) protein is Myoglobin (MB).